The sequence spans 103 residues: Cyclotide vibi-I (103 aa).

A signal peptide spans 1–9; sequence AAFALPAFA. Positions 10 to 69 are excised as a propeptide; that stretch reads SFEKDVITPAALEAVLNRKAPLSNIMMENDAILNVIANVKTVISNPVLEEALLKTNHGVN. Positions 70 to 99 form a cross-link, cyclopeptide (Gly-Asn); the sequence is GIPCGESCVWIPCLTSTVGCSCKSKVCYRN. 3 disulfide bridges follow: Cys-73–Cys-89, Cys-77–Cys-91, and Cys-82–Cys-96. The propeptide occupies 100 to 103; sequence SLDN.

This is a cyclic peptide.

Probably participates in a plant defense mechanism. This chain is Cyclotide vibi-I, found in Viola biflora (Yellow wood violet).